Here is a 670-residue protein sequence, read N- to C-terminus: tRNA 5-methylaminomethyl-2-thiouridine biosynthesis bifunctional protein MnmC (670 aa).

The segment at Met1–Ile242 is tRNA (mnm(5)s(2)U34)-methyltransferase. The tract at residues Ile269 to Glu670 is FAD-dependent cmnm(5)s(2)U34 oxidoreductase.

This sequence in the N-terminal section; belongs to the methyltransferase superfamily. tRNA (mnm(5)s(2)U34)-methyltransferase family. The protein in the C-terminal section; belongs to the DAO family. It depends on FAD as a cofactor.

Its subcellular location is the cytoplasm. It catalyses the reaction 5-aminomethyl-2-thiouridine(34) in tRNA + S-adenosyl-L-methionine = 5-methylaminomethyl-2-thiouridine(34) in tRNA + S-adenosyl-L-homocysteine + H(+). Catalyzes the last two steps in the biosynthesis of 5-methylaminomethyl-2-thiouridine (mnm(5)s(2)U) at the wobble position (U34) in tRNA. Catalyzes the FAD-dependent demodification of cmnm(5)s(2)U34 to nm(5)s(2)U34, followed by the transfer of a methyl group from S-adenosyl-L-methionine to nm(5)s(2)U34, to form mnm(5)s(2)U34. In Haemophilus influenzae (strain ATCC 51907 / DSM 11121 / KW20 / Rd), this protein is tRNA 5-methylaminomethyl-2-thiouridine biosynthesis bifunctional protein MnmC.